A 323-amino-acid polypeptide reads, in one-letter code: MSSLPPAIFLMGPTAAGKTDLAMALADALPCELISVDSALIYRGMDIGTAKPSRELLARYPHRLIDIRDPAESYSAAEFRADALAAMAEATARGRIPLLVGGTMLYYKALLEGLADMPGADPEVRAAIEAEALAEGWEALHRQLAEVDPESAARIHPNDPQRLMRALEVYRLGGVSMSDLRRRQSAEKADFDASGRNQLPYTVAQLAIAPEQRQVLHARIAQRFRQMLEQGFIAEVEALHARSDLHAGLPSIRAVGYRQVWDYLDGKLSYAEMTERGIIATRQLAKRQFTWLRSWSHLHWMDSLAGDNLPRALKYLKTVSILA.

Residue 12-19 participates in ATP binding; that stretch reads GPTAAGKT. Position 14–19 (14–19) interacts with substrate; sequence TAAGKT. Interaction with substrate tRNA regions lie at residues 37–40 and 161–165; these read DSAL and QRLMR.

Belongs to the IPP transferase family. Monomer. Mg(2+) is required as a cofactor.

It carries out the reaction adenosine(37) in tRNA + dimethylallyl diphosphate = N(6)-dimethylallyladenosine(37) in tRNA + diphosphate. Catalyzes the transfer of a dimethylallyl group onto the adenine at position 37 in tRNAs that read codons beginning with uridine, leading to the formation of N6-(dimethylallyl)adenosine (i(6)A). The protein is tRNA dimethylallyltransferase of Pseudomonas aeruginosa (strain UCBPP-PA14).